Consider the following 335-residue polypeptide: Tyrosine-protein phosphatase 1 (335 aa).

The region spanning 15–328 (LLGKFKFIQN…LFIYHAAKYL (314 aa)) is the Tyrosine-protein phosphatase domain. Residue Ser-83 is modified to Phosphoserine; by CLK1. The active-site Phosphocysteine intermediate is the Cys-252.

The protein belongs to the protein-tyrosine phosphatase family. Non-receptor class subfamily. In terms of processing, activated by phosphorylation at Ser-83.

The protein resides in the cytoplasm. It catalyses the reaction O-phospho-L-tyrosyl-[protein] + H2O = L-tyrosyl-[protein] + phosphate. In terms of biological role, is not required for vegetative growth. This is Tyrosine-protein phosphatase 1 (PTP1) from Saccharomyces cerevisiae (strain ATCC 204508 / S288c) (Baker's yeast).